The primary structure comprises 258 residues: Aspartate/glutamate leucyltransferase (258 aa).

It belongs to the R-transferase family. Bpt subfamily.

Its subcellular location is the cytoplasm. The enzyme catalyses N-terminal L-glutamyl-[protein] + L-leucyl-tRNA(Leu) = N-terminal L-leucyl-L-glutamyl-[protein] + tRNA(Leu) + H(+). It catalyses the reaction N-terminal L-aspartyl-[protein] + L-leucyl-tRNA(Leu) = N-terminal L-leucyl-L-aspartyl-[protein] + tRNA(Leu) + H(+). Functions in the N-end rule pathway of protein degradation where it conjugates Leu from its aminoacyl-tRNA to the N-termini of proteins containing an N-terminal aspartate or glutamate. This Rhizobium leguminosarum bv. trifolii (strain WSM2304) protein is Aspartate/glutamate leucyltransferase.